A 343-amino-acid chain; its full sequence is Shematrin-like protein 3 (343 aa).

Positions methionine 1–alanine 16 are cleaved as a signal peptide.

As to expression, prismatic layer of shell (at protein level).

The protein localises to the secreted. The sequence is that of Shematrin-like protein 3 from Pinctada maxima (Silver-lipped pearl oyster).